A 277-amino-acid polypeptide reads, in one-letter code: Phosphate import ATP-binding protein PstB (277 aa).

The ABC transporter domain maps to 31-272; that stretch reads IEVPGLSLFY…PAKKQTEDYI (242 aa). An ATP-binding site is contributed by 63 to 70; it reads GPSGCGKS.

Belongs to the ABC transporter superfamily. Phosphate importer (TC 3.A.1.7) family. In terms of assembly, the complex is composed of two ATP-binding proteins (PstB), two transmembrane proteins (PstC and PstA) and a solute-binding protein (PstS).

It localises to the cell inner membrane. The enzyme catalyses phosphate(out) + ATP + H2O = ADP + 2 phosphate(in) + H(+). Its function is as follows. Part of the ABC transporter complex PstSACB involved in phosphate import. Responsible for energy coupling to the transport system. This is Phosphate import ATP-binding protein PstB from Pseudomonas putida (Arthrobacter siderocapsulatus).